The chain runs to 285 residues: Sulfur carrier protein TtuD (285 aa).

Rhodanese domains are found at residues 20 to 127 (EDPK…PLTT) and 161 to 281 (KEGK…VPIA). Cysteine persulfide is present on cysteine 240.

Post-translationally, cys-240 can accept a sulfur atom as persulfide forms from cysteine desulfurases IscS and SufS.

The protein operates within tRNA modification. Its function is as follows. Required for the efficient 2-thiolation of 5-methyluridine residue at position 54 in the T loop of tRNAs, leading to 5-methyl-2-thiouridine (m(5)s(2)U or s(2)T). TtuD is a sulfur carrier protein that has a role to direct sulfur flow from cysteine desulfurases to m(5)s(2)U synthesis in vivo. It enhances the cysteine desulfurase activity of IscS and SufS, as well as the formation of thiocarboxylated TtuB (TtuB-COSH) in the presence of these desulfurases. The sequence is that of Sulfur carrier protein TtuD from Thermus thermophilus (strain ATCC BAA-163 / DSM 7039 / HB27).